Consider the following 154-residue polypeptide: Myoglobin (154 aa).

Residues 2 to 148 (GLSDGEWQLV…FRNDIAAKYK (147 aa)) enclose the Globin domain. A Phosphoserine modification is found at Ser-4. His-65 provides a ligand contact to nitrite. His-65 provides a ligand contact to O2. Thr-68 bears the Phosphothreonine mark. Position 94 (His-94) interacts with heme b.

Belongs to the globin family. As to quaternary structure, monomeric.

It localises to the cytoplasm. Its subcellular location is the sarcoplasm. It catalyses the reaction Fe(III)-heme b-[protein] + nitric oxide + H2O = Fe(II)-heme b-[protein] + nitrite + 2 H(+). The enzyme catalyses H2O2 + AH2 = A + 2 H2O. Its function is as follows. Monomeric heme protein which primary function is to store oxygen and facilitate its diffusion within muscle tissues. Reversibly binds oxygen through a pentacoordinated heme iron and enables its timely and efficient release as needed during periods of heightened demand. Depending on the oxidative conditions of tissues and cells, and in addition to its ability to bind oxygen, it also has a nitrite reductase activity whereby it regulates the production of bioactive nitric oxide. Under stress conditions, like hypoxia and anoxia, it also protects cells against reactive oxygen species thanks to its pseudoperoxidase activity. The protein is Myoglobin (MB) of Proechimys guairae (Guaira spiny rat).